Reading from the N-terminus, the 363-residue chain is UDP-N-acetylglucosamine--N-acetylmuramyl-(pentapeptide) pyrophosphoryl-undecaprenol N-acetylglucosamine transferase (363 aa).

UDP-N-acetyl-alpha-D-glucosamine contacts are provided by residues 12–14 (TAG), Arg166, Ser196, and Gln291.

It belongs to the glycosyltransferase 28 family. MurG subfamily.

It localises to the cell inner membrane. It carries out the reaction di-trans,octa-cis-undecaprenyl diphospho-N-acetyl-alpha-D-muramoyl-L-alanyl-D-glutamyl-meso-2,6-diaminopimeloyl-D-alanyl-D-alanine + UDP-N-acetyl-alpha-D-glucosamine = di-trans,octa-cis-undecaprenyl diphospho-[N-acetyl-alpha-D-glucosaminyl-(1-&gt;4)]-N-acetyl-alpha-D-muramoyl-L-alanyl-D-glutamyl-meso-2,6-diaminopimeloyl-D-alanyl-D-alanine + UDP + H(+). It participates in cell wall biogenesis; peptidoglycan biosynthesis. Its function is as follows. Cell wall formation. Catalyzes the transfer of a GlcNAc subunit on undecaprenyl-pyrophosphoryl-MurNAc-pentapeptide (lipid intermediate I) to form undecaprenyl-pyrophosphoryl-MurNAc-(pentapeptide)GlcNAc (lipid intermediate II). This Legionella pneumophila (strain Paris) protein is UDP-N-acetylglucosamine--N-acetylmuramyl-(pentapeptide) pyrophosphoryl-undecaprenol N-acetylglucosamine transferase.